A 54-amino-acid polypeptide reads, in one-letter code: Large ribosomal subunit protein bL33 (54 aa).

The protein belongs to the bacterial ribosomal protein bL33 family.

This chain is Large ribosomal subunit protein bL33, found in Frankia alni (strain DSM 45986 / CECT 9034 / ACN14a).